A 447-amino-acid polypeptide reads, in one-letter code: Phosphoglucosamine mutase (447 aa).

The active-site Phosphoserine intermediate is the S102. The Mg(2+) site is built by S102, D241, D243, and D245. S102 is subject to Phosphoserine.

Belongs to the phosphohexose mutase family. It depends on Mg(2+) as a cofactor. Activated by phosphorylation.

It carries out the reaction alpha-D-glucosamine 1-phosphate = D-glucosamine 6-phosphate. In terms of biological role, catalyzes the conversion of glucosamine-6-phosphate to glucosamine-1-phosphate. This is Phosphoglucosamine mutase from Delftia acidovorans (strain DSM 14801 / SPH-1).